Here is a 484-residue protein sequence, read N- to C-terminus: FAD-dependent monooxygenase aurC (484 aa).

A signal peptide spans 1-21 (MGAYSFRVIIVGGSITGMTLA). 3 residues coordinate FAD: Glu-35, Gly-49, and Arg-108. Residue Tyr-216 is part of the active site. Positions 308 and 321 each coordinate FAD. A helical membrane pass occupies residues 451-471 (FAVASLIVLIVVLARALDSPA).

The protein belongs to the paxM FAD-dependent monooxygenase family. FAD is required as a cofactor.

It localises to the membrane. Its pathway is polyketide biosynthesis. Functionally, FAD-dependent monooxygenase; part of the gene cluster that mediates the biosynthesis of aurovertins, fungal polyketides that exhibit potent inhibition of adenosine triphosphate synthase. Tha biosynthesis starts with the HR-PKS aurA that selects propionate as the starter unit; synthesizes a hexa-ene chain through the repeated functions of the KR and DH domains in the first six iterations; selectively introduces three alpha-methyl substitutions at C4, C6, and C16 using the S-adensylmethionine-dependent cMET; and shuts off KR and DH in the last three iterations to afford a 1,3,5-triketo portion that can undergo intramolecular cyclization to yield the alpha-pyrone intermediate. AurE may act as a cyclase and enhances the rate of pyrone formation and product release of aurA. The methyltransferase aurB then methylates the C17 hydroxyl group. C17 methylation is required to initiate epoxidation by the downstream monooxygenase aurC. The monooxygenase aurC and the epoxide hydrolase aurD can iteratively transform the terminal triene portion of the methylated precursor into the dioxabicyclo[3.2.1]octane scaffold of aurovertin E. Epoxidation modifications of the precursor occur in two separate steps; bis-epoxidation of the two terminal olefins takes place first, followed by another epoxidation that occurs at C7-C8 after tetrahydrofuran formation. The O-acyltransferase aurG converts aurovertin E to aurovertin A. The sequence is that of FAD-dependent monooxygenase aurC from Calcarisporium arbuscula (Dendryphion arbuscula).